The primary structure comprises 152 residues: MTSKTNMTSNKFAYDFFPWSNDTNSSQQIKNIKPPPKRSNRPTKRTTFTSEQVTLLELEFAKNEYICKDRRGELAQTIELTECQVKTWFQNRRTKKRRCTSPLRKSMMKKSDERSPSPQNPSSQHVQNLQTFFHSWPSHFAYSLPSDQQNNV.

The segment covering 21 to 30 has biased composition (polar residues); it reads NDTNSSQQIK. Disordered stretches follow at residues 21–48 and 92–126; these read NDTN…RTTF and RRTK…SQHV. Over residues 35–44 the composition is skewed to basic residues; it reads PPKRSNRPTK. Residues 41-100 constitute a DNA-binding region (homeobox); that stretch reads RPTKRTTFTSEQVTLLELEFAKNEYICKDRRGELAQTIELTECQVKTWFQNRRTKKRRCT. Residues 116 to 126 are compositionally biased toward polar residues; the sequence is PSPQNPSSQHV.

In terms of assembly, may interact with homeobox protein ceh-14.

The protein localises to the nucleus. Functionally, probable transcription factor, modulating expression of helix-loop-helix protein mbr-1, perhaps acting in concert with homeobox protein ceh-14. May play a minor role in axon guidance in the DVC interneuron. The protein is Homeobox protein ceh-63 of Caenorhabditis elegans.